A 476-amino-acid polypeptide reads, in one-letter code: Glutamate--tRNA ligase 1 (476 aa).

A 'HIGH' region motif is present at residues Pro9–Gly19. Positions Lys238–Arg242 match the 'KMSKS' region motif. Lys241 lines the ATP pocket.

This sequence belongs to the class-I aminoacyl-tRNA synthetase family. Glutamate--tRNA ligase type 1 subfamily. Monomer.

The protein localises to the cytoplasm. It carries out the reaction tRNA(Glu) + L-glutamate + ATP = L-glutamyl-tRNA(Glu) + AMP + diphosphate. In terms of biological role, catalyzes the attachment of glutamate to tRNA(Glu) in a two-step reaction: glutamate is first activated by ATP to form Glu-AMP and then transferred to the acceptor end of tRNA(Glu). In Bartonella bacilliformis (strain ATCC 35685 / KC583 / Herrer 020/F12,63), this protein is Glutamate--tRNA ligase 1.